The following is a 203-amino-acid chain: A-type ATP synthase subunit E (203 aa).

The protein belongs to the V-ATPase E subunit family. Has multiple subunits with at least A(3), B(3), C, D, E, F, H, I and proteolipid K(x).

It is found in the cell membrane. Its function is as follows. Component of the A-type ATP synthase that produces ATP from ADP in the presence of a proton gradient across the membrane. The polypeptide is A-type ATP synthase subunit E (Methanococcus vannielii (strain ATCC 35089 / DSM 1224 / JCM 13029 / OCM 148 / SB)).